Reading from the N-terminus, the 895-residue chain is Splicing factor 3B subunit 2 (895 aa).

The span at 1-10 shows a compositional bias: basic and acidic residues; sequence MATEHPEPPK. Disordered regions lie at residues 1-24, 65-136, 197-373, and 400-453; these read MATE…PGHY, LNRP…LRVG, AKMG…EYVT, and KKEK…SKKK. Lysine 10 participates in a covalent cross-link: Glycyl lysine isopeptide (Lys-Gly) (interchain with G-Cter in SUMO2). One can recognise an SAP domain in the interval 24-58; the sequence is YGAWAAQELQAKLAEIGAPIQGNREELVERLQSYT. Composition is skewed to pro residues over residues 90–114 and 122–133; these read IPMP…PPPG and AHPPNLGPPPPL. A coiled-coil region spans residues 140-199; that stretch reads ALSEEERLKLAQQQAALLMQQEERAKQQGDHSLKEHELLEQQKRAAVLLEQERQQEIAKM. The segment covering 218–238 has biased composition (low complexity); sequence PLGPRVAAPVGPVGPTPTVLP. Residues arginine 222, arginine 245, and arginine 247 each carry the omega-N-methylarginine modification. Positions 241 to 254 are enriched in pro residues; the sequence is APVPRPRGPPPPPG. Lysine 275 carries the N6-acetyllysine modification. A compositionally biased stretch (basic and acidic residues) spans 277 to 286; it reads LQLKESRQEE. Residue lysine 280 forms a Glycyl lysine isopeptide (Lys-Gly) (interchain with G-Cter in SUMO2) linkage. Serine 289 is modified (phosphoserine). Threonine 298 bears the Phosphothreonine mark. Serine 307 and serine 309 each carry phosphoserine. The residue at position 311 (threonine 311) is a Phosphothreonine. A Phosphoserine modification is found at serine 317. Basic residues predominate over residues 322-338; that stretch reads EKNRKRRNRKKKKKPQR. The span at 347 to 359 shows a compositional bias: basic and acidic residues; that stretch reads SGDREKDSTRSRG. Serine 360 and serine 362 each carry phosphoserine. Residues lysine 400 and lysine 412 each participate in a glycyl lysine isopeptide (Lys-Gly) (interchain with G-Cter in SUMO2) cross-link. Basic and acidic residues-rich tracts occupy residues 400-414 and 422-431; these read KKEK…DKLE and KGFEEEHKDS. Residues 401-550 form a required for interaction with PRMT9 region; it reads KEKEKEPEKL…QEKEEQKTMK (150 aa). A phosphoserine mark is found at serine 431, serine 435, and serine 436. A Glycyl lysine isopeptide (Lys-Gly) (interchain with G-Cter in SUMO2) cross-link involves residue lysine 492. Arginine 508 bears the Omega-N-methylarginine; by PRMT9; alternate mark. Arginine 508 bears the Symmetric dimethylarginine; by PRMT9; alternate mark. Arginine 515 carries the post-translational modification Omega-N-methylarginine. Lysine 543 participates in a covalent cross-link: Glycyl lysine isopeptide (Lys-Gly) (interchain with G-Cter in SUMO2). The interval 691 to 757 is disordered; it reads AAEFQTKTEE…PGGFSSVPAG (67 aa). The span at 712-732 shows a compositional bias: acidic residues; the sequence is EPSDEESSEEEEEEESDEDKP. Lysine 770 participates in a covalent cross-link: Glycyl lysine isopeptide (Lys-Gly) (interchain with G-Cter in SUMO2). A Phosphothreonine modification is found at threonine 780. Residues lysine 790, lysine 843, and lysine 857 each participate in a glycyl lysine isopeptide (Lys-Gly) (interchain with G-Cter in SUMO2) cross-link. Residues 844–869 show a composition bias toward basic and acidic residues; sequence YEEHVREQQAQVEKEDFSDMVAEHAA. The tract at residues 844–895 is disordered; it reads YEEHVREQQAQVEKEDFSDMVAEHAAKQKQKKRKAQPQDSRGGSKKYKEFKF. A Phosphoserine modification is found at serine 861.

As to quaternary structure, component of the 17S U2 SnRNP complex, a ribonucleoprotein complex that contains small nuclear RNA (snRNA) U2 and a number of specific proteins. Part of the SF3B subcomplex of the 17S U2 SnRNP complex. SF3B associates with the splicing subcomplex SF3A and a 12S RNA unit to form the U2 small nuclear ribonucleoproteins complex (U2 snRNP). Within the SF3B complex, interacts directly with SF3B4. Found in a complex with PRMT9, SF3B2 and SF3B4. Interacts (Arg-508-methylated form) with SMN1 (via Tudor domain). Interacts with RBM7. Interacts with ERCC6. Component of the minor spliceosome. Within this complex, interacts with SCNM1 and CRIPT. In terms of assembly, (Microbial infection) Interacts with HIV-1 Vpr. Methylation at Arg-508 by PRMT9 is required for the interaction with SMN1.

The protein localises to the nucleus. It is found in the nucleus speckle. In terms of biological role, component of the 17S U2 SnRNP complex of the spliceosome, a large ribonucleoprotein complex that removes introns from transcribed pre-mRNAs. The 17S U2 SnRNP complex (1) directly participates in early spliceosome assembly and (2) mediates recognition of the intron branch site during pre-mRNA splicing by promoting the selection of the pre-mRNA branch-site adenosine, the nucleophile for the first step of splicing. Within the 17S U2 SnRNP complex, SF3B2 is part of the SF3B subcomplex, which is required for 'A' complex assembly formed by the stable binding of U2 snRNP to the branchpoint sequence in pre-mRNA. Sequence independent binding of SF3A and SF3B subcomplexes upstream of the branch site is essential, it may anchor U2 snRNP to the pre-mRNA. May also be involved in the assembly of the 'E' complex. Also acts as a component of the minor spliceosome, which is involved in the splicing of U12-type introns in pre-mRNAs. The polypeptide is Splicing factor 3B subunit 2 (SF3B2) (Homo sapiens (Human)).